Here is a 283-residue protein sequence, read N- to C-terminus: Phosphatidylglycerol--prolipoprotein diacylglyceryl transferase (283 aa).

3 helical membrane-spanning segments follow: residues 17–37 (LAVR…TFLG), 56–76 (FLTW…VLFY), and 92–112 (WEGG…IWLF). R139 contacts a 1,2-diacyl-sn-glycero-3-phospho-(1'-sn-glycerol). 2 consecutive transmembrane segments (helical) span residues 222-242 (GQTA…AEFA) and 255-275 (GLSM…VGFV).

This sequence belongs to the Lgt family.

It is found in the cell inner membrane. The enzyme catalyses L-cysteinyl-[prolipoprotein] + a 1,2-diacyl-sn-glycero-3-phospho-(1'-sn-glycerol) = an S-1,2-diacyl-sn-glyceryl-L-cysteinyl-[prolipoprotein] + sn-glycerol 1-phosphate + H(+). It functions in the pathway protein modification; lipoprotein biosynthesis (diacylglyceryl transfer). Functionally, catalyzes the transfer of the diacylglyceryl group from phosphatidylglycerol to the sulfhydryl group of the N-terminal cysteine of a prolipoprotein, the first step in the formation of mature lipoproteins. This is Phosphatidylglycerol--prolipoprotein diacylglyceryl transferase from Neisseria gonorrhoeae (strain ATCC 700825 / FA 1090).